The chain runs to 617 residues: Thioredoxin reductase (617 aa).

FAD contacts are provided by residues proline 127–glycine 128, aspartate 147–lysine 150, threonine 163–cysteine 164, glycine 168–lysine 172, alanine 237, aspartate 433, and glutamate 440–alanine 442. Cysteine 164 and cysteine 169 are joined by a disulfide. The segment at histidine 514–leucine 528 is loop important for the interaction with TRX1. Histidine 585 serves as a coordination point for FAD. Catalysis depends on histidine 585, which acts as the Proton acceptor. The cysteines at positions 611 and 616 are disulfide-linked.

The protein belongs to the class-I pyridine nucleotide-disulfide oxidoreductase family. In terms of assembly, homodimer. It depends on FAD as a cofactor.

The protein localises to the mitochondrion. It localises to the cytoplasm. The enzyme catalyses [thioredoxin]-dithiol + NADP(+) = [thioredoxin]-disulfide + NADPH + H(+). Its function is as follows. Catalyzes the transfer of electrons from NADPH to thioredoxins TRX1, TRX2 and TRX3, which in turn act as reductants of disulfide containing proteins. Able to reduce nitroglutathione (GSNO), a compound involved in the transport of nitric oxide (NO); however, TRX1 is more efficient in reducing GSNO. Has no catalytic activity towards oxidized glutathione (GSSG). The protein is Thioredoxin reductase of Plasmodium falciparum (isolate 3D7).